Reading from the N-terminus, the 555-residue chain is MRGVKLLAACLYLAAAATVVVHAEDPYFHHVWNVTYGTASPLGVPQQVILINGQFPGPNINSTSNNNVIINVFNNLDEPFLLTWNGIQHRKNCWQDGTPGTMCPIMPGTNYTYHFQPKDQIGSYFYYPTTGMHRAAGGYGGLRVNSRLLIPVPYADPEDDYTVLIGDWYTKSHTQLKKFLDGGRTIGRPDGIVINGKSGKGDGSDAPLFTLKPGKTYRVRICNVGVKTSINFRIQNHKMKLVEMEGSHVLQNDYDSLDVHVGQCFGTIVTANQEPKDYYMVASSRFLKTVITTTGLLRYEGGKGPASSQLPAGPVGWAWSLNQFRSFRWNLTASAARPNPQGSYHYGKINITRTIKLVNTQGKVDGKLRFALNGVSHTEPETPLKLAEYFGISDKVFKYDTITDDPTPEQIKNIKIEPNVLNITHRTFVEVVFENHEKSVQSWHLDGYSFFSVAVEPGTWTPEKRKNYNLLDAVSRHTVQVYPKCWAAILLTFDNCGMWNVRSENTERRYLGQQLYASVLSPEKSLRDEYNMPETSLQCGLVKNTPKPVNPYAGA.

The N-terminal stretch at 1-23 (MRGVKLLAACLYLAAAATVVVHA) is a signal peptide. Plastocyanin-like domains lie at 25 to 145 (DPYF…LRVN) and 158 to 301 (EDDY…RYEG). N-linked (GlcNAc...) asparagine glycosylation is found at N33, N61, and N110. C103 and C539 are joined by a disulfide. N-linked (GlcNAc...) asparagine glycans are attached at residues N330, N350, and N422. The Plastocyanin-like 3 domain maps to 345-524 (HYGKINITRT…LYASVLSPEK (180 aa)).

This sequence belongs to the multicopper oxidase family. In terms of tissue distribution, maximal expression in early binucleate microspores; declines considerably in mature trinucleate pollen.

The protein resides in the secreted. In terms of biological role, probable oxidase that may be involved in pollen tube growth. The polypeptide is L-ascorbate oxidase homolog (Bp10) (Brassica napus (Rape)).